The sequence spans 626 residues: Phosphomethylpyrimidine synthase (626 aa).

Residues Asn-237, Met-266, Tyr-295, His-331, 351-353 (SRG), 392-395 (DGLR), and Glu-431 contribute to the substrate site. His-435 contributes to the Zn(2+) binding site. Tyr-458 contributes to the substrate binding site. His-499 lines the Zn(2+) pocket. [4Fe-4S] cluster-binding residues include Cys-579, Cys-582, and Cys-587.

The protein belongs to the ThiC family. In terms of assembly, homodimer. It depends on [4Fe-4S] cluster as a cofactor.

It catalyses the reaction 5-amino-1-(5-phospho-beta-D-ribosyl)imidazole + S-adenosyl-L-methionine = 4-amino-2-methyl-5-(phosphooxymethyl)pyrimidine + CO + 5'-deoxyadenosine + formate + L-methionine + 3 H(+). The protein operates within cofactor biosynthesis; thiamine diphosphate biosynthesis. Functionally, catalyzes the synthesis of the hydroxymethylpyrimidine phosphate (HMP-P) moiety of thiamine from aminoimidazole ribotide (AIR) in a radical S-adenosyl-L-methionine (SAM)-dependent reaction. This chain is Phosphomethylpyrimidine synthase, found in Cupriavidus necator (strain ATCC 17699 / DSM 428 / KCTC 22496 / NCIMB 10442 / H16 / Stanier 337) (Ralstonia eutropha).